A 142-amino-acid polypeptide reads, in one-letter code: Hemoglobin subunit alpha-2 (142 aa).

The Globin domain occupies 2-142 (VLSAADKTNV…VSTVLTSKYR (141 aa)). Histidine 59 is a binding site for O2. Histidine 88 serves as a coordination point for heme b.

It belongs to the globin family. Heterotetramer of two alpha chains and two beta chains. Red blood cells.

Functionally, involved in oxygen transport from the lung to the various peripheral tissues. Hemopressin acts as an antagonist peptide of the cannabinoid receptor CNR1. Hemopressin-binding efficiently blocks cannabinoid receptor CNR1 and subsequent signaling. This is Hemoglobin subunit alpha-2 (HBA2) from Equus quagga burchellii (Burchell's zebra).